The primary structure comprises 320 residues: Olfactory receptor 51E2 (320 aa).

Topologically, residues 1–24 are extracellular; sequence MSSCNFTHATFMLIGIPGLEEAHF. Asn5 carries an N-linked (GlcNAc...) asparagine glycan. Residues 25–45 form a helical membrane-spanning segment; that stretch reads WFGFPLLSMYAVALFGNCIVV. At 46–53 the chain is on the cytoplasmic side; it reads FIVRTERS. Residues 54-74 traverse the membrane as a helical segment; that stretch reads LHAPMYLFLCMLAAIDLALST. At 75-98 the chain is on the extracellular side; the sequence is STMPKILALFWFDSREITFDACLA. Residues Cys96 and Cys178 are joined by a disulfide bond. The helical transmembrane segment at 99-119 threads the bilayer; the sequence is QMFFIHALSAIESTILLAMAF. Topologically, residues 120 to 138 are cytoplasmic; the sequence is DRYVAICHPLRHAAVLNNT. A helical membrane pass occupies residues 139-159; sequence VTVQIGMVALVRGSLFFFPLP. The Extracellular portion of the chain corresponds to 160 to 195; sequence LLIKRLAFCHSNVLSHSYCVHQDVMKLAYTDTLPNV. Residues 196 to 216 form a helical membrane-spanning segment; sequence VYGLTAILLVMGVDVMFISLS. The Cytoplasmic portion of the chain corresponds to 217–236; it reads YFLIIRAVLQLPSKSERAKA. A helical transmembrane segment spans residues 237-257; it reads FGTCVSHIGVVLAFYVPLIGL. The Extracellular portion of the chain corresponds to 258-272; the sequence is SVVHRFGNSLDPIVH. Residues 273–293 traverse the membrane as a helical segment; the sequence is VLMGDVYLLLPPVINPIIYGA. At 294–320 the chain is on the cytoplasmic side; sequence KTKQIRTRVLAMFKISCDKDIEAGGNT.

Belongs to the G-protein coupled receptor 1 family. In terms of tissue distribution, expressed in brain and liver. Expressed only in some areas of the brain and in the olfactory epithelium.

The protein resides in the cell membrane. Its subcellular location is the early endosome membrane. Its function is as follows. Olfactory receptor. The activity of this receptor is probably mediated by G-proteins which induce elevation of intracellular Ca(2+), cAMP and activation of phosphorylation of the protein kinases PKA and MAPK3/MAPK1. Activation of OR51E2 may affect melanocyte proliferation, differentiation, and melanogenesis and may increase proliferation and migration of primary retinal pigment epithelial (RPE) cells. Activated by the short chain fatty acids (SCFA), acetate and propionate. In response to SCFA, may positively regulate renin secretion and increase blood pressure. May also be activated by steroid hormones and regulate cell proliferation. Activated by L-lactate in glomus cells. The polypeptide is Olfactory receptor 51E2 (Or51e2) (Rattus norvegicus (Rat)).